Here is a 224-residue protein sequence, read N- to C-terminus: Cytidylate kinase (224 aa).

Position 9–17 (G9–T17) interacts with ATP.

It belongs to the cytidylate kinase family. Type 1 subfamily.

The protein resides in the cytoplasm. The enzyme catalyses CMP + ATP = CDP + ADP. It carries out the reaction dCMP + ATP = dCDP + ADP. The sequence is that of Cytidylate kinase from Saccharophagus degradans (strain 2-40 / ATCC 43961 / DSM 17024).